A 444-amino-acid chain; its full sequence is uncharacterized protein (444 aa).

The Radical SAM core domain occupies 164 to 381 (GAYGKSFLLE…EKALKKEGIR (218 aa)). [4Fe-4S] cluster contacts are provided by Cys178, Cys182, and Cys185.

Requires [4Fe-4S] cluster as cofactor.

This is an uncharacterized protein from Methanocaldococcus jannaschii (strain ATCC 43067 / DSM 2661 / JAL-1 / JCM 10045 / NBRC 100440) (Methanococcus jannaschii).